The sequence spans 103 residues: Small ribosomal subunit protein uS10 (103 aa).

The protein belongs to the universal ribosomal protein uS10 family. In terms of assembly, part of the 30S ribosomal subunit.

In terms of biological role, involved in the binding of tRNA to the ribosomes. This chain is Small ribosomal subunit protein uS10, found in Shewanella pealeana (strain ATCC 700345 / ANG-SQ1).